The sequence spans 256 residues: Na(+)-translocating NADH-quinone reductase subunit C (256 aa).

The helical transmembrane segment at 12–32 (LGVVIGLSLVCSIIVSTAAVG) threads the bilayer. T224 carries the post-translational modification FMN phosphoryl threonine.

Belongs to the NqrC family. Composed of six subunits; NqrA, NqrB, NqrC, NqrD, NqrE and NqrF. The cofactor is FMN.

Its subcellular location is the cell inner membrane. It carries out the reaction a ubiquinone + n Na(+)(in) + NADH + H(+) = a ubiquinol + n Na(+)(out) + NAD(+). Its activity is regulated as follows. This reaction is tightly coupled to the Na(+) pumping activity and specifically requires Na(+) for activity. Inhibited by korormicin and 2-N-heptyl-4-hydroxyquinoline N-oxide (HQNO). In terms of biological role, NQR complex catalyzes the reduction of ubiquinone-1 to ubiquinol by two successive reactions, coupled with the transport of Na(+) ions from the cytoplasm to the periplasm. NqrA to NqrE are probably involved in the second step, the conversion of ubisemiquinone to ubiquinol. The polypeptide is Na(+)-translocating NADH-quinone reductase subunit C (Vibrio alginolyticus).